Reading from the N-terminus, the 500-residue chain is NAD(P)H-quinone oxidoreductase chain 4, chloroplastic (500 aa).

15 helical membrane passes run 4–24, 37–57, 87–107, 113–130, 134–154, 167–187, 207–227, 242–262, 272–292, 305–325, 330–350, 364–384, 386–406, 417–437, and 463–483; these read FPWL…LFFF, ICIC…HFEL, IGPI…AWPV, LFYF…GSFS, LLLF…LLSM, FILY…GIGL, IALE…KSPI, HYST…YGLV, AHSI…IYAA, IAYS…SISD, GAIL…FLAG, MGGL…LSMA, LALP…GIIT, VITL…LSML, and FVAI…DFVF.

Belongs to the complex I subunit 4 family.

The protein resides in the plastid. Its subcellular location is the chloroplast thylakoid membrane. It catalyses the reaction a plastoquinone + NADH + (n+1) H(+)(in) = a plastoquinol + NAD(+) + n H(+)(out). It carries out the reaction a plastoquinone + NADPH + (n+1) H(+)(in) = a plastoquinol + NADP(+) + n H(+)(out). The polypeptide is NAD(P)H-quinone oxidoreductase chain 4, chloroplastic (Cucumis sativus (Cucumber)).